Reading from the N-terminus, the 342-residue chain is Methionyl-tRNA formyltransferase (342 aa).

Residue Ser-110–Pro-113 participates in (6S)-5,6,7,8-tetrahydrofolate binding.

It belongs to the Fmt family.

It catalyses the reaction L-methionyl-tRNA(fMet) + (6R)-10-formyltetrahydrofolate = N-formyl-L-methionyl-tRNA(fMet) + (6S)-5,6,7,8-tetrahydrofolate + H(+). Its function is as follows. Attaches a formyl group to the free amino group of methionyl-tRNA(fMet). The formyl group appears to play a dual role in the initiator identity of N-formylmethionyl-tRNA by promoting its recognition by IF2 and preventing the misappropriation of this tRNA by the elongation apparatus. This chain is Methionyl-tRNA formyltransferase, found in Synechococcus sp. (strain CC9311).